A 680-amino-acid chain; its full sequence is MSARATRPRSRRGRHPLPGELDPVAESSEEVDANNGRFETKPELHQEYLGPGLQSPRNWIKEGCDVGSHAVLSLSPEEQCEPEVEAHQVLQEAPLDSGPAEISVPSVYETLQCRLSSLEAVVAALRHHSLSFPKSVEAEDRDQGAPGPFGDEKEDAGPGQQEAARLIERNAWLRLALCNREDELACTQASLQDAQAEKETLQRQVQELEDSLMQMEASPPTPILRAGRRNSNSSTSGAERRPWVPQDSSMAHPFLQRLRSDSSTQSFGCLSTQHPAPETYLMEDQMGQLQGSIEKLKCFNRLLLAVLQGYKGRCESLSIKLAKREAEATALRLALQYSEDCEEVYEVLLALKMAGLGTGVGTTKGDLQAAEKEASRLLMKKEATMEVETPQPSSEGSGVDKPTPEELASQLHGYVQHLRERWALVKIPEELGPVTAPKATMPHAEATVQAILEIQPGPTLPHLEKSQIQQDLAATRDRLADLVLRLQLTQREKRGLELREAALRAQGPAHQLLLQQLRWERAHFAGDGSSGGSSEDPSSEEEAGEDRQQHYQGPLALLDGQMGKVWDSENVSQELSASLARAIDLRAQLQSLRQQLEQVTQKGRTRRVQSAELSRELCKAHSALALAFRGAHRKQEEQRLKLEQQVARLQAQQAEELAVLTATARALGKPGAPQPAQTFL.

The segment covering 1–15 has biased composition (basic residues); it reads MSARATRPRSRRGRH. 2 disordered regions span residues 1–51 and 134–161; these read MSAR…YLGP and KSVE…PGQQ. Positions 179–218 form a coiled coil; sequence NREDELACTQASLQDAQAEKETLQRQVQELEDSLMQMEAS. Disordered regions lie at residues 220 to 247 and 384 to 405; these read PTPI…VPQD and TMEV…PTPE. Coiled-coil stretches lie at residues 363–386 and 467–506; these read TKGD…ATME and QIQQ…LRAQ. A disordered region spans residues 524–549; it reads FAGDGSSGGSSEDPSSEEEAGEDRQQ. Positions 573-662 form a coiled coil; the sequence is QELSASLARA…QAEELAVLTA (90 aa).

Belongs to the MCC family. Interacts via its C-terminus with the first PDZ domain of USH1C.

The protein is Harmonin-binding protein USHBP1 of Mus musculus (Mouse).